The primary structure comprises 559 residues: 5-epiaristolochene synthase (559 aa).

Mg(2+)-binding residues include aspartate 312, aspartate 316, aspartate 455, threonine 459, and glutamate 463. A DDXXD motif motif is present at residues aspartate 312–aspartate 316.

It belongs to the terpene synthase family. In terms of assembly, monomer. The cofactor is Mg(2+). As to expression, expressed only in treated leaves an not detected in control leaves.

It is found in the cytoplasm. It carries out the reaction (2E,6E)-farnesyl diphosphate = (+)-5-epi-aristolochene + diphosphate. It functions in the pathway secondary metabolite biosynthesis; terpenoid biosynthesis. Catalyzes the cyclization of trans,trans-farnesyl diphosphate (FPP) to the bicyclic intermediate 5-epi-aristolochene, initial step in the conversion of FPP to the sesquiterpenoid antifungal phytoalexin capsidiol. Produces germacrene A as an enzyme-bound intermediate that is not released by the enzyme, but is further cyclized to produce the bicyclic 5-epi-aristolochene. This Capsicum annuum (Capsicum pepper) protein is 5-epiaristolochene synthase (EAS).